The chain runs to 134 residues: UPF0102 protein Rmet_3430 (134 aa).

This sequence belongs to the UPF0102 family.

This chain is UPF0102 protein Rmet_3430, found in Cupriavidus metallidurans (strain ATCC 43123 / DSM 2839 / NBRC 102507 / CH34) (Ralstonia metallidurans).